Consider the following 297-residue polypeptide: Formamidopyrimidine-DNA glycosylase (297 aa).

The active-site Schiff-base intermediate with DNA is Pro-2. Residue Glu-3 is the Proton donor of the active site. The active-site Proton donor; for beta-elimination activity is the Lys-58. DNA contacts are provided by His-104, Arg-127, and Lys-170. An FPG-type zinc finger spans residues 261 to 297 (SVYDREGKPCRKEGCSGTIQRFVQGGRSTFYCPICQR). The active-site Proton donor; for delta-elimination activity is the Arg-287.

Belongs to the FPG family. As to quaternary structure, monomer. Zn(2+) serves as cofactor.

It catalyses the reaction Hydrolysis of DNA containing ring-opened 7-methylguanine residues, releasing 2,6-diamino-4-hydroxy-5-(N-methyl)formamidopyrimidine.. The catalysed reaction is 2'-deoxyribonucleotide-(2'-deoxyribose 5'-phosphate)-2'-deoxyribonucleotide-DNA = a 3'-end 2'-deoxyribonucleotide-(2,3-dehydro-2,3-deoxyribose 5'-phosphate)-DNA + a 5'-end 5'-phospho-2'-deoxyribonucleoside-DNA + H(+). Its function is as follows. Involved in base excision repair of DNA damaged by oxidation or by mutagenic agents. Acts as a DNA glycosylase that recognizes and removes damaged bases. Has a preference for oxidized purines, such as 7,8-dihydro-8-oxoguanine (8-oxoG). Has AP (apurinic/apyrimidinic) lyase activity and introduces nicks in the DNA strand. Cleaves the DNA backbone by beta-delta elimination to generate a single-strand break at the site of the removed base with both 3'- and 5'-phosphates. The polypeptide is Formamidopyrimidine-DNA glycosylase (Chelativorans sp. (strain BNC1)).